Consider the following 516-residue polypeptide: Maturase K (516 aa).

Belongs to the intron maturase 2 family. MatK subfamily.

The protein localises to the plastid. It is found in the chloroplast. Usually encoded in the trnK tRNA gene intron. Probably assists in splicing its own and other chloroplast group II introns. This Galanthus nivalis (Common snowdrop) protein is Maturase K.